Reading from the N-terminus, the 604-residue chain is NADP-dependent malic enzyme, mitochondrial (604 aa).

The interval 29–50 is disordered; it reads APAQGCHSKPGPARPVPLKKRG. Y137 acts as the Proton donor in catalysis. Position 190 (R190) interacts with NAD(+). Catalysis depends on K208, which acts as the Proton acceptor. Residues E280, D281, and D304 each coordinate a divalent metal cation. NAD(+) is bound at residue D304. Phosphoserine is present on S371. N443 provides a ligand contact to NAD(+).

Belongs to the malic enzymes family. The cofactor is Mg(2+). Requires Mn(2+) as cofactor. In terms of tissue distribution, expressed predominantly in organs with a low-division rate.

The protein localises to the mitochondrion matrix. The catalysed reaction is (S)-malate + NADP(+) = pyruvate + CO2 + NADPH. It carries out the reaction oxaloacetate + H(+) = pyruvate + CO2. Functionally, catalyzes the oxidative decarboxylation of (S)-malate to pyruvate using NADP(+) as a cofactor. Can also reverse the decarboxylation reaction, but only with significantly lower efficiency. This chain is NADP-dependent malic enzyme, mitochondrial, found in Homo sapiens (Human).